Reading from the N-terminus, the 91-residue chain is UPF0147 protein DKAM_0139 (91 aa).

Belongs to the UPF0147 family.

The sequence is that of UPF0147 protein DKAM_0139 from Desulfurococcus amylolyticus (strain DSM 18924 / JCM 16383 / VKM B-2413 / 1221n) (Desulfurococcus kamchatkensis).